Consider the following 1324-residue polypeptide: Probable phosphoribosylformylglycinamidine synthase (1324 aa).

ATP is bound by residues 314–325 (GATTGTGGRIRD), 394–396 (SGF), and Ala-681. 4 residues coordinate Mg(2+): Asp-682, Glu-721, Asn-725, and Asp-894. Residue Ser-896 coordinates ATP. The 243-residue stretch at 1053-1295 (RVAIIREEGS…LTWQWAESSE (243 aa)) folds into the Glutamine amidotransferase type-1 domain. The Nucleophile role is filled by Cys-1146. Catalysis depends on residues His-1280 and Asp-1282.

The protein in the N-terminal section; belongs to the FGAMS family.

The protein localises to the cytoplasm. The catalysed reaction is N(2)-formyl-N(1)-(5-phospho-beta-D-ribosyl)glycinamide + L-glutamine + ATP + H2O = 2-formamido-N(1)-(5-O-phospho-beta-D-ribosyl)acetamidine + L-glutamate + ADP + phosphate + H(+). It functions in the pathway purine metabolism; IMP biosynthesis via de novo pathway; 5-amino-1-(5-phospho-D-ribosyl)imidazole from N(2)-formyl-N(1)-(5-phospho-D-ribosyl)glycinamide: step 1/2. Functionally, phosphoribosylformylglycinamidine synthase involved in the purines biosynthetic pathway. Catalyzes the ATP-dependent conversion of formylglycinamide ribonucleotide (FGAR) and glutamine to yield formylglycinamidine ribonucleotide (FGAM) and glutamate. The sequence is that of Probable phosphoribosylformylglycinamidine synthase from Caenorhabditis elegans.